Here is a 260-residue protein sequence, read N- to C-terminus: Carbonic anhydrase 2 (260 aa).

The Alpha-carbonic anhydrase domain occupies 3 to 259 (HHWGYDSHNG…LKSREVRASF (257 aa)). Residue His-64 is the Proton donor/acceptor of the active site. 3 residues coordinate Zn(2+): His-94, His-96, and His-119. A substrate-binding site is contributed by 198-199 (TT).

It belongs to the alpha-carbonic anhydrase family. Requires Zn(2+) as cofactor.

It localises to the cytoplasm. The protein localises to the cell membrane. It catalyses the reaction hydrogencarbonate + H(+) = CO2 + H2O. The enzyme catalyses urea = cyanamide + H2O. Its activity is regulated as follows. Inhibited by acetazolamide. Functionally, catalyzes the reversible hydration of carbon dioxide. Can also hydrate cyanamide to urea. The polypeptide is Carbonic anhydrase 2 (CA2) (Gallus gallus (Chicken)).